We begin with the raw amino-acid sequence, 146 residues long: Large ribosomal subunit protein uL15 (146 aa).

The segment covering 1-13 (MKLHELKPAEGSR) has biased composition (basic and acidic residues). The tract at residues 1 to 59 (MKLHELKPAEGSRKVRNRVGRGTSSGNGKTSGRGQKGQKARSGGGVRLGFEGGQTPLFR) is disordered. 2 stretches are compositionally biased toward gly residues: residues 23-35 (TSSG…GRGQ) and 42-52 (SGGGVRLGFEG).

It belongs to the universal ribosomal protein uL15 family. Part of the 50S ribosomal subunit.

Its function is as follows. Binds to the 23S rRNA. The polypeptide is Large ribosomal subunit protein uL15 (Streptococcus agalactiae serotype Ia (strain ATCC 27591 / A909 / CDC SS700)).